Here is a 69-residue protein sequence, read N- to C-terminus: Large ribosomal subunit protein bL31 (69 aa).

The Zn(2+) site is built by C16, C18, C37, and C40.

The protein belongs to the bacterial ribosomal protein bL31 family. Type A subfamily. As to quaternary structure, part of the 50S ribosomal subunit. Requires Zn(2+) as cofactor.

Binds the 23S rRNA. The sequence is that of Large ribosomal subunit protein bL31 from Teredinibacter turnerae (strain ATCC 39867 / T7901).